The chain runs to 145 residues: Anaerobic nitrite reductase NSHB5 (145 aa).

The region spanning 2-142 (GFSETQEELV…LAAAIKEEMK (141 aa)) is the Globin domain. The Homodimerization motif lies at 35 to 39 (EIAPA). Positions 45, 59, 61, 84, 88, and 89 each coordinate heme b. Positions 96–108 (DAYFEVVKTALLD) match the Homodimerization motif.

This sequence belongs to the plant globin family. Homodimer. Requires heme b as cofactor. Expressed in embryonic (embryos, coleoptiles and seminal roots) and vegetative (leaves and roots) organs.

The protein resides in the cytoplasm. The protein localises to the nucleus. It catalyses the reaction Fe(III)-heme b-[protein] + nitric oxide + H2O = Fe(II)-heme b-[protein] + nitrite + 2 H(+). Functionally, phytoglobin that reduces nitrite to nitric oxide under anoxic conditions (e.g. during flooding or in waterlogged soil). May not function as an oxygen storage or transport protein. Has an unusually high affinity for O(2) through an hexacoordinate heme iron because of a very low dissociation constant. This chain is Anaerobic nitrite reductase NSHB5, found in Oryza sativa subsp. japonica (Rice).